The primary structure comprises 89 residues: UPF0145 protein MJ1170 (89 aa).

The protein belongs to the UPF0145 family. Highly divergent.

This Methanocaldococcus jannaschii (strain ATCC 43067 / DSM 2661 / JAL-1 / JCM 10045 / NBRC 100440) (Methanococcus jannaschii) protein is UPF0145 protein MJ1170.